Here is a 240-residue protein sequence, read N- to C-terminus: Enolase-phosphatase E1 (240 aa).

2 residues coordinate Mg(2+): Asp-9 and Glu-11. Substrate contacts are provided by residues 129 to 130 (SS) and Lys-168. Asp-195 provides a ligand contact to Mg(2+).

The protein belongs to the HAD-like hydrolase superfamily. MasA/MtnC family. Monomer. The cofactor is Mg(2+).

The protein resides in the cytoplasm. It is found in the nucleus. The enzyme catalyses 5-methylsulfanyl-2,3-dioxopentyl phosphate + H2O = 1,2-dihydroxy-5-(methylsulfanyl)pent-1-en-3-one + phosphate. The protein operates within amino-acid biosynthesis; L-methionine biosynthesis via salvage pathway; L-methionine from S-methyl-5-thio-alpha-D-ribose 1-phosphate: step 3/6. It participates in amino-acid biosynthesis; L-methionine biosynthesis via salvage pathway; L-methionine from S-methyl-5-thio-alpha-D-ribose 1-phosphate: step 4/6. Functionally, bifunctional enzyme that catalyzes the enolization of 2,3-diketo-5-methylthiopentyl-1-phosphate (DK-MTP-1-P) into the intermediate 2-hydroxy-3-keto-5-methylthiopentenyl-1-phosphate (HK-MTPenyl-1-P), which is then dephosphorylated to form the acireductone 1,2-dihydroxy-3-keto-5-methylthiopentene (DHK-MTPene). In Candida tropicalis (strain ATCC MYA-3404 / T1) (Yeast), this protein is Enolase-phosphatase E1.